A 346-amino-acid chain; its full sequence is Serine/threonine-protein phosphatase PP1(4.8) (346 aa).

Positions 46–65 (QSAQTQESTPKTNGTGRATT) are disordered. Mn(2+) contacts are provided by D102, H104, D130, and N162. H163 functions as the Proton donor in the catalytic mechanism. Positions 211 and 287 each coordinate Mn(2+).

It belongs to the PPP phosphatase family. PP-1 subfamily. The cofactor is Mn(2+).

It catalyses the reaction O-phospho-L-seryl-[protein] + H2O = L-seryl-[protein] + phosphate. The catalysed reaction is O-phospho-L-threonyl-[protein] + H2O = L-threonyl-[protein] + phosphate. In Trypanosoma brucei brucei, this protein is Serine/threonine-protein phosphatase PP1(4.8).